The primary structure comprises 515 residues: FADH(2)-dependent monooxygenase TftD (515 aa).

Substrate is bound at residue 100–104 (RLPDA). FAD contacts are provided by residues 151 to 153 (LNF), 157 to 160 (QTDR), and threonine 192. 203 to 204 (GC) is a binding site for substrate. FAD is bound at residue 457 to 460 (TMTR).

Belongs to the FADH(2)-utilizing monooxygenase family. Homotetramer. The chlorophenol-4-monooxygenase is composed of an oxygenase component TftD and a reductase component TftC.

It functions in the pathway xenobiotic degradation. In terms of biological role, oxygenase component of a two-component system that degrades 2,4,5-trichlorophenol. Uses FADH(2) supplied by TftC to oxidize 2,4,5-trichlorophenol (2,4,5-TCP) to 2,5-dichloro-p-benzoquinone, which is chemically reduced to 2,5-dichloro-p-hydroquinone (2,5-DiCHQ). Then, TftD oxidizes the latter to 5-chloro-2-hydroxy-p-benzoquinone. The sequence is that of FADH(2)-dependent monooxygenase TftD (tftD) from Burkholderia cepacia (Pseudomonas cepacia).